A 143-amino-acid polypeptide reads, in one-letter code: Holo-[acyl-carrier-protein] synthase (143 aa).

Mg(2+) contacts are provided by Asp9 and Glu63.

Belongs to the P-Pant transferase superfamily. AcpS family. It depends on Mg(2+) as a cofactor.

Its subcellular location is the cytoplasm. The catalysed reaction is apo-[ACP] + CoA = holo-[ACP] + adenosine 3',5'-bisphosphate + H(+). In terms of biological role, transfers the 4'-phosphopantetheine moiety from coenzyme A to a Ser of acyl-carrier-protein. The protein is Holo-[acyl-carrier-protein] synthase of Burkholderia pseudomallei (strain 668).